The primary structure comprises 229 residues: DNA repair protein RecO (229 aa).

It belongs to the RecO family.

Involved in DNA repair and RecF pathway recombination. This is DNA repair protein RecO from Legionella pneumophila (strain Paris).